Reading from the N-terminus, the 2130-residue chain is MESGERLTSSSVSSTAAASSPVSSTPSVASAVSKSGLTTGAASLSSTINTGEWWRTADSHSRSGAAFFPPLLGPPLLGISPLFAPPAQNHDSTPFHPRTTGKNNRGSLEKGINGSLNGNSTTAASAISTSVLSTSIATSAGQVKVVTSGAGGRKYNQEQNKVQLLDTRADKIKDKKPRKKAVESSSNSDSDSGSSSDTSSEGISSSDSDDLEEDEEEEEDQSAEESEDDESDSENEAHHENKNKVLMHSGVKDMKTDGQKAHEKSQEKRTHQQIPLVSDSQTHSSFQSQQKQPQVLSQQLPFIFQSSQAKEESVNKHTSVIQSTGLVPNVKPLSLVHQTKKEAYLKIIVPPPDLLKAGNKNTSEESIPLISDVRSKREQYKQTFPAAQLKKQESSKNLKKVIASLSSSKPTSCSPAHQKLTSLENNHSNPFLTNALLGNHQPNGVIQSVIQEVPLALTTKQKSQTKINESVAIASSTPFSLPVNLSACGKKTTGNRTLVVPSTSPVLPGSGKDKPVSNNAVNAVKTQHCLPSAKLVVEQFRGVDSDAPSSKESDDSNDDDDDDEDEDEDDEDDDSDDSQSESDSNSESDTDGSEDEDDEDDKDQDESDTDTEGEKTPLKLKKTGSSIKSSSIGPVAHSTPLNLQVAKTPSSAPSALCPETQPAVFLGTTPSTLTPSSHCGISKRRRVTDERELRVPLEYGWQRETRIRNFGGRLQGEVAYFAPCGKKLRQYPEVVKGVQWCLLKEEEVVPCIRAMEGRRGRPPNPDRQHSREESRMRRRKGRPPNVGSTEFLDSTDAKLLRKLQAQEIARQAAQIKLLRKLQKQEQARAAKEAKKQQAIMAAEEKRKQKEQIKIMKQQEKIKRIQQIRMEKELRAQQILEAKKKKKEEAANAKLLEAEKRIKEKEMRRQQAVLLKHQELERHRLDMERERRRQHMMLMKAMEARKKAEEKERLKQEKRDEKRLNKERKLEQRRLELEMAKELKKPNEDMCLADQKALPELPRIPGLVLSGSTFSDCLMIVQFLRNFGKVLGFDVNTDVPSLSTLQEGLLNIGDSRGEVQDLLVKLVTAAVCDPGLVTGYKAKTILGEHLLNVGINRDNVSEILQIFMEAHCGQTELTESLKTKAFQAHTPAQKAAVLAFLVNELACSKSVVSEIDKNIDYMSNLRRDKWMVEGKLRNLRIIHAKKTGKRDATGGGEVGEEPHSLETPTPGRKRRRKGGDSDYDDDDDDDSDDQADEDDEDEEDKEDKKGKKAEVCEDEDDGDQTVSVEELEKQIEKLTKQQSQYRKKLFEASHCLRSMMFGQDRYRRRYWILPQCGGIFVEGMESGEGLEEIAKEKEKLKKVESIHIKEEVFEISEEKISCLNTTRCEQKEDLKEKDNTNLFLQKPGSFSKLSKLLEVAKMPPECDVMPQKPNGGAANGCTPSYQNTSQNSLCSLQPSVSQSSSEKSDSSNLFSPTASGTGKFYSSPLIPSDQLLKTLTEKNRQWFSLLPRVPCDDMSVTHVDTPATTSLTPQSHPPSKSPSPVPSPLLGSTSAQSPMGLSPFAMPPLQQMKPGLPVMGLQFCGWPTGVLTSNVQFSSPLPTLGSGLGLSEGNGNSFLTSSVPTSKSESPALQTEKVAFATCTAVEVAKPVDHPNPKPIPEEMQYGWWRITDPEDLKSLHKVLHLRGIREKALQKQIQKHMDYITLACIKNKDVAIIDINENEDNQVTRDVVENWSVEEQAMEVDLAILQQVEDLERRVASASLQVKGWLCPEPASEREDLVYHEHKSIIRLHKKHDGDSAGGGEGSTSSLERKNDNPLDIAVTRLADLERNIERRYLKSPLSTTIQIKLDNVGTVTVPAPAPSISGDGDGTEEDIAPGLRVWRKALSEARSAAQVALCIQQLQKSIAWEKSIMKVYCQICRKGDNEELLLLCDGCDKGCHTYCHRPKITTIPDGDWFCPACIAKASGQTLKLKKLQIKGKKSNEQKRGRKLPGDTEDEDSATTSTSLKRGKTEPKKRKMDESVSVSQGKQENFTAIKKPKRDDSKDLAICSMILSELETHEDAWPFLLPVNLKLVPGYKKVIKKPMDFSTIRDKLTSGQYPNVEAFSLDVRLVFDNCETFNEDDSDIGRAGHNMRKYFEKKWTEIFKLS.

Disordered regions lie at residues 1-42 (MESG…TGAA), 82-118 (LFAP…SLNG), 151-293 (GGRK…QKQP), 491-518 (KTTG…PVSN), 543-633 (VDSD…SSIG), 756-790 (EGRR…GSTE), and 944-966 (RKKA…LNKE). Residues 8–33 (TSSSVSSTAAASSPVSSTPSVASAVS) are compositionally biased toward low complexity. Positions 183–206 (ESSSNSDSDSGSSSDTSSEGISSS) are enriched in low complexity. The span at 207–234 (DSDDLEEDEEEEEDQSAEESEDDESDSE) shows a compositional bias: acidic residues. Residues 250–270 (GVKDMKTDGQKAHEKSQEKRT) show a composition bias toward basic and acidic residues. A compositionally biased stretch (polar residues) spans 272–283 (QQIPLVSDSQTH). A compositionally biased stretch (low complexity) spans 284-293 (SSFQSQQKQP). The span at 492–505 (TTGNRTLVVPSTSP) shows a compositional bias: polar residues. Basic and acidic residues predominate over residues 543–554 (VDSDAPSSKESD). Over residues 555–611 (DSNDDDDDDEDEDEDDEDDDSDDSQSESDSNSESDTDGSEDEDDEDDKDQDESDTDT) the composition is skewed to acidic residues. Over residues 623-633 (TGSSIKSSSIG) the composition is skewed to low complexity. In terms of domain architecture, MBD spans 687–762 (VTDERELRVP…RAMEGRRGRP (76 aa)). Basic and acidic residues predominate over residues 756–775 (EGRRGRPPNPDRQHSREESR). Residues 797–984 (AKLLRKLQAQ…ELEMAKELKK (188 aa)) are a coiled coil. One can recognise a DDT domain in the interval 1010–1075 (GSTFSDCLMI…VTAAVCDPGL (66 aa)). Disordered stretches follow at residues 1186-1265 (TGKR…DQTV), 1431-1454 (SLCS…NLFS), 1499-1545 (VTHV…PFAM), and 1773-1795 (HKKH…ERKN). Residues 1220–1244 (SDYDDDDDDDSDDQADEDDEDEEDK) show a composition bias toward acidic residues. Residues 1245-1254 (EDKKGKKAEV) show a composition bias toward basic and acidic residues. The span at 1514 to 1526 (SHPPSKSPSPVPS) shows a compositional bias: pro residues. The PHD-type zinc-finger motif lies at 1895 to 1945 (KVYCQICRKGDNEELLLLCDGCDKGCHTYCHRPKITTIPDGDWFCPACIAK). Residues 1957-2019 (QIKGKKSNEQ…KQENFTAIKK (63 aa)) are disordered. A compositionally biased stretch (basic and acidic residues) spans 1991–2002 (GKTEPKKRKMDE). A compositionally biased stretch (polar residues) spans 2004-2014 (VSVSQGKQENF). One can recognise a Bromo domain in the interval 2022-2126 (RDDSKDLAIC…KYFEKKWTEI (105 aa)).

The protein belongs to the WAL family.

It is found in the nucleus. Regulatory subunit of the ATP-dependent BRF-1 and BRF-5 ISWI chromatin remodeling complexes, which form ordered nucleosome arrays on chromatin and facilitate access to DNA during DNA-templated processes such as DNA replication, transcription, and repair. Both complexes regulate the spacing of nucleosomes along the chromatin and have the ability to slide mononucleosomes to the center of a DNA template. The BRF-1 ISWI chromatin remodeling complex has a lower ATP hydrolysis rate than the BRF-5 ISWI chromatin remodeling complex. Chromatin reader protein. Represses the expression of mitochondrial function-related genes, perhaps by transcriptional regulation. The chain is Bromodomain adjacent to zinc finger domain protein 2B (BAZ2B) from Gallus gallus (Chicken).